The following is a 124-amino-acid chain: Large ribosomal subunit protein bL12 (124 aa).

This sequence belongs to the bacterial ribosomal protein bL12 family. As to quaternary structure, homodimer. Part of the ribosomal stalk of the 50S ribosomal subunit. Forms a multimeric L10(L12)X complex, where L10 forms an elongated spine to which 2 to 4 L12 dimers bind in a sequential fashion. Binds GTP-bound translation factors.

Forms part of the ribosomal stalk which helps the ribosome interact with GTP-bound translation factors. Is thus essential for accurate translation. In Cupriavidus metallidurans (strain ATCC 43123 / DSM 2839 / NBRC 102507 / CH34) (Ralstonia metallidurans), this protein is Large ribosomal subunit protein bL12.